We begin with the raw amino-acid sequence, 339 residues long: Anthranilate phosphoribosyltransferase (339 aa).

5-phospho-alpha-D-ribose 1-diphosphate is bound by residues Gly86, 89-90 (GD), Thr94, 96-99 (NIST), 114-122 (KHGNRGVSS), and Ser126. Gly86 contacts anthranilate. Ser98 provides a ligand contact to Mg(2+). Asn117 provides a ligand contact to anthranilate. Arg172 contacts anthranilate. Positions 230 and 231 each coordinate Mg(2+).

It belongs to the anthranilate phosphoribosyltransferase family. As to quaternary structure, homodimer. It depends on Mg(2+) as a cofactor.

The catalysed reaction is N-(5-phospho-beta-D-ribosyl)anthranilate + diphosphate = 5-phospho-alpha-D-ribose 1-diphosphate + anthranilate. The protein operates within amino-acid biosynthesis; L-tryptophan biosynthesis; L-tryptophan from chorismate: step 2/5. Catalyzes the transfer of the phosphoribosyl group of 5-phosphorylribose-1-pyrophosphate (PRPP) to anthranilate to yield N-(5'-phosphoribosyl)-anthranilate (PRA). The chain is Anthranilate phosphoribosyltransferase from Photobacterium profundum (strain SS9).